Here is a 96-residue protein sequence, read N- to C-terminus: Large ribosomal subunit protein bL28 (96 aa).

The tract at residues 1-21 is disordered; it reads MSRVCELTGKGPMTGNNVSHA.

The protein belongs to the bacterial ribosomal protein bL28 family.

The sequence is that of Large ribosomal subunit protein bL28 from Jannaschia sp. (strain CCS1).